A 140-amino-acid polypeptide reads, in one-letter code: RxLR effector protein Avh23 (140 aa).

Residues 1 to 21 (MRLTYFLTVIVVATLHAGGTA) form the signal peptide. Residues 54–72 (RMLRKVKEDTVSKKDHEER) carry the RxLR-dEER motif. An ADA2-binding IR1 repeat occupies 100–113 (QGAFQRQNAFVNRD). One copy of the ADA2-binding IR2 repeat lies at 114-127 (QGAFQRQNAFVKRA).

It belongs to the RxLR effector family. In terms of assembly, interacts with host histone acetyl transferase SAGA complex subunit ADA2.

The protein resides in the secreted. Its subcellular location is the host nucleus. The protein localises to the host cytoplasm. Its function is as follows. Effector that suppresses plant defense responses during the early stages of pathogen infection. Suppresses cell death induced by effectors and PAMPs in plant hosts. Acts as a modulator of histone acetyltransferase (HAT) in plants. Avh23 binds to the ADA2 subunit of the HAT complex SAGA and disrupts its assembly by interfering with the association of ADA2 with the catalytic subunit GCN5. As such, Avh23 suppresses H3K9 acetylation mediated by the ADA2/GCN5 module and increases plant susceptibility. This is RxLR effector protein Avh23 from Phytophthora sojae (Soybean stem and root rot agent).